The chain runs to 241 residues: Uridylate kinase (241 aa).

ATP-binding positions include 10–13, Gly-53, and Arg-57; that span reads KLSG. UMP is bound by residues Asp-72 and 133–140; that span reads AGSPYFST. ATP-binding residues include Asn-161, Tyr-167, and Asp-170.

It belongs to the UMP kinase family. Homohexamer.

It localises to the cytoplasm. It carries out the reaction UMP + ATP = UDP + ADP. Its pathway is pyrimidine metabolism; CTP biosynthesis via de novo pathway; UDP from UMP (UMPK route): step 1/1. Inhibited by UTP. Its function is as follows. Catalyzes the reversible phosphorylation of UMP to UDP. The chain is Uridylate kinase from Onion yellows phytoplasma (strain OY-M).